The chain runs to 328 residues: MKQVVYTASPNSCQIHVWSLNNEGELSLIQTVDVPGEVQPMVVSPDRKHLYVGIRPQFSIVTYQIGSRGELAQQGISSIPGSPTHISTDKQGRFLFSASYSYNNLSVSLIDDQGIVGEPVQVIAGLQAPHSANIDWDNKQLLVPCLKEDRVRIFEMAKEGYLTEKRAEEITTAMGAGPRHMAFHPNQQVIYCINELDSTVDVYRKWEKYRTVQTVDSLPADLAGVRWSADIHITPDGRHLYTSERTSSLISHFVISQDGSNLTLAGHYKTEIQPRGFAIDHSGKYLIASGQKSDHISVSSIDKYTGKLTELTRYPVGKGPMWVTVLAL.

It belongs to the cycloisomerase 2 family.

The catalysed reaction is 6-phospho-D-glucono-1,5-lactone + H2O = 6-phospho-D-gluconate + H(+). Its pathway is carbohydrate degradation; pentose phosphate pathway; D-ribulose 5-phosphate from D-glucose 6-phosphate (oxidative stage): step 2/3. In terms of biological role, catalyzes the hydrolysis of 6-phosphogluconolactone to 6-phosphogluconate. In Photorhabdus laumondii subsp. laumondii (strain DSM 15139 / CIP 105565 / TT01) (Photorhabdus luminescens subsp. laumondii), this protein is 6-phosphogluconolactonase.